Here is a 149-residue protein sequence, read N- to C-terminus: Cell division protein SepF (149 aa).

The segment at 12–57 (SNEEDDYYEEDGYEQSQQQEQQTTQQTSSQPRFVRQTTQSQTPAGL) is disordered. Residues 13–24 (NEEDDYYEEDGY) show a composition bias toward acidic residues. A compositionally biased stretch (low complexity) spans 25–41 (EQSQQQEQQTTQQTSSQ). The span at 46 to 57 (RQTTQSQTPAGL) shows a compositional bias: polar residues.

Belongs to the SepF family. As to quaternary structure, homodimer. Interacts with FtsZ.

Its subcellular location is the cytoplasm. Its function is as follows. Cell division protein that is part of the divisome complex and is recruited early to the Z-ring. Probably stimulates Z-ring formation, perhaps through the cross-linking of FtsZ protofilaments. Its function overlaps with FtsA. This chain is Cell division protein SepF, found in Leuconostoc mesenteroides subsp. mesenteroides (strain ATCC 8293 / DSM 20343 / BCRC 11652 / CCM 1803 / JCM 6124 / NCDO 523 / NBRC 100496 / NCIMB 8023 / NCTC 12954 / NRRL B-1118 / 37Y).